Reading from the N-terminus, the 508-residue chain is Polyamine oxidase FMS1 (508 aa).

The protein belongs to the flavin monoamine oxidase family. Requires FAD as cofactor.

The enzyme catalyses spermine + O2 + H2O = 3-aminopropanal + spermidine + H2O2. It carries out the reaction spermidine + O2 + H2O = 3-aminopropanal + putrescine + H2O2. It catalyses the reaction N(1)-acetylspermine + O2 + H2O = 3-acetamidopropanal + spermidine + H2O2. The catalysed reaction is N(1)-acetylspermidine + O2 + H2O = 3-acetamidopropanal + putrescine + H2O2. The enzyme catalyses N(8)-acetylspermidine + O2 + H2O = 4-acetamidobutanal + propane-1,3-diamine + H2O2. Its function is as follows. Involved in the production of beta-alanine, a precursor of pantothenic acid. Multicopy suppressor of fenpropimorph resistance. This chain is Polyamine oxidase FMS1 (FMS1), found in Saccharomyces cerevisiae (strain ATCC 204508 / S288c) (Baker's yeast).